Reading from the N-terminus, the 272-residue chain is HMP-PP phosphatase (272 aa).

The active-site Nucleophile is aspartate 8. Mg(2+) is bound by residues aspartate 8, aspartate 10, and aspartate 212.

This sequence belongs to the HAD-like hydrolase superfamily. Cof family. Mg(2+) is required as a cofactor.

It catalyses the reaction 4-amino-2-methyl-5-(diphosphooxymethyl)pyrimidine + H2O = 4-amino-2-methyl-5-(phosphooxymethyl)pyrimidine + phosphate + H(+). Functionally, catalyzes the hydrolysis of 4-amino-2-methyl-5-hydroxymethylpyrimidine pyrophosphate (HMP-PP) to 4-amino-2-methyl-5-hydroxymethylpyrimidine phosphate (HMP-P). The sequence is that of HMP-PP phosphatase from Enterobacter sp. (strain 638).